The primary structure comprises 258 residues: Indole-3-glycerol phosphate synthase (258 aa).

The protein belongs to the TrpC family.

The catalysed reaction is 1-(2-carboxyphenylamino)-1-deoxy-D-ribulose 5-phosphate + H(+) = (1S,2R)-1-C-(indol-3-yl)glycerol 3-phosphate + CO2 + H2O. It participates in amino-acid biosynthesis; L-tryptophan biosynthesis; L-tryptophan from chorismate: step 4/5. This chain is Indole-3-glycerol phosphate synthase, found in Geobacillus kaustophilus (strain HTA426).